The following is a 359-amino-acid chain: Protein Wnt-2 (359 aa).

An N-terminal signal peptide occupies residues M1–S25. 11 cysteine pairs are disulfide-bonded: C75/C86, C126/C134, C136/C156, C205/C219, C207/C214, C277/C308, C293/C303, C307/C347, C323/C338, C325/C335, and C330/C331. S211 carries O-palmitoleoyl serine; by PORCN lipidation. A glycan (N-linked (GlcNAc...) asparagine) is linked at N294.

It belongs to the Wnt family. Post-translationally, palmitoleoylation is required for efficient binding to frizzled receptors. Depalmitoleoylation leads to Wnt signaling pathway inhibition.

The protein resides in the secreted. Its subcellular location is the extracellular space. It localises to the extracellular matrix. In terms of biological role, ligand for members of the frizzled family of seven transmembrane receptors. Probable developmental protein. May be a signaling molecule which affects the development of discrete regions of tissues. Is likely to signal over only few cell diameters. This Echinops telfairi (Lesser hedgehog tenrec) protein is Protein Wnt-2 (WNT2).